The following is a 197-amino-acid chain: Protein FAM219B (197 aa).

2 disordered regions span residues 1-77 and 117-142; these read MATE…HRDH and DENL…YSSA. Ser14, Ser125, and Ser127 each carry phosphoserine.

The protein belongs to the FAM219 family.

This is Protein FAM219B (Fam219b) from Mus musculus (Mouse).